A 1393-amino-acid polypeptide reads, in one-letter code: DNA-directed RNA polymerase subunit beta' (1393 aa).

Cys-70, Cys-72, Cys-85, and Cys-88 together coordinate Zn(2+). Mg(2+)-binding residues include Asp-461, Asp-463, and Asp-465. Residues Cys-804, Cys-877, Cys-884, and Cys-887 each contribute to the Zn(2+) site.

This sequence belongs to the RNA polymerase beta' chain family. The RNAP catalytic core consists of 2 alpha, 1 beta, 1 beta' and 1 omega subunit. When a sigma factor is associated with the core the holoenzyme is formed, which can initiate transcription. Mg(2+) is required as a cofactor. Requires Zn(2+) as cofactor.

It catalyses the reaction RNA(n) + a ribonucleoside 5'-triphosphate = RNA(n+1) + diphosphate. Its function is as follows. DNA-dependent RNA polymerase catalyzes the transcription of DNA into RNA using the four ribonucleoside triphosphates as substrates. This Rhodospirillum rubrum (strain ATCC 11170 / ATH 1.1.1 / DSM 467 / LMG 4362 / NCIMB 8255 / S1) protein is DNA-directed RNA polymerase subunit beta'.